The sequence spans 54 residues: MGMSFSHLLIVLLIIFVLFGAGKLPQVMSDLAKGLKAFKEGMKDDGNDNDKTNN.

Residues methionine 1 to alanine 21 form a helical membrane-spanning segment.

The protein belongs to the TatA/E family. The Tat system comprises two distinct complexes: a TatABC complex, containing multiple copies of TatA, TatB and TatC subunits, and a separate TatA complex, containing only TatA subunits. Substrates initially bind to the TatABC complex, which probably triggers association of the separate TatA complex to form the active translocon.

The protein localises to the cell inner membrane. Functionally, part of the twin-arginine translocation (Tat) system that transports large folded proteins containing a characteristic twin-arginine motif in their signal peptide across membranes. TatA could form the protein-conducting channel of the Tat system. In Rickettsia prowazekii (strain Madrid E), this protein is Sec-independent protein translocase protein TatA.